An 842-amino-acid chain; its full sequence is MLFLLVVAHAIAVLIFGCGFFPQKKVLDGHAALDGTHARDPVFDKLVVVVVDAMRSDFLFDASISKFHFIHEKLADGSAWGFTAHSNPPTVTLPRLKGITTGSTPNFLDAILNVAEDDTSSSLLAQDSWLWQFRNNAGKRIRFFGDDTWLKLFPPVEANEDSQTMFDEYEGTNSFFVSDFTQVDLNVTRHIDRQLRETSEWDVLILHYLGLDHIGHKDGPYSRFMGPKHEEMDSIIRKLYDELDMQSTLLVLMGDHGMNDLGNHGGSSAGETSAGMVFLSDKLAAYKPSKEQSSAKEFPMKIPSLNAGEEKTFHYLKKIQQIDVVPTISSLFNVAIPKNNVGVIIPEFLQLFKDVSLQKAIVKENWNQLSGLTKGKTQIMEETKNFVIEDVIKNMKDVQENLAKTATDYNYPLLFIGCFLSIVITGTIYYRYARHVAININTSILIAIAALMGISVFGSSFIEEEHQFWWWIITGLVLLSMVNLNFSSWKSHIIVLFCLRLIRGWNNSGQKYTYDNVIANLLKGNIDALWWLNLITVTVVGLNLKSLRFGNHTVSLLGFSDLLSMGLLSMITFLYKVNWSIVNGERVPDLFYKWVLETASLIVEDATLYREEDLIHTALIPLARIFFKLFFAVLVSRLMIQKFFQVSDISKSLAVVSRYVTIFLVFQTPSHNIGLFLFFEIINEITVHIIRERYQSDYLLAVIFGIILQFFTFFQSGGTNSIATVDLSNAYNGVSENYNIYVVGLMMCISNFAPTIYWSFYNWRITYANANSSRWQTLVAAKYPFIIIQSTIGCCLLLACIILRYHLFIWSVFSPKLCYYMVWTIFVGIIVHWIPEILLLLT.

N186 is a glycosylation site (N-linked (GlcNAc...) asparagine). A helical transmembrane segment spans residues 409–429 (YNYPLLFIGCFLSIVITGTIY). The N-linked (GlcNAc...) asparagine glycan is linked to N441. A run of 2 helical transmembrane segments spans residues 442–462 (TSIL…SSFI) and 468–488 (FWWW…NFSS). An N-linked (GlcNAc...) asparagine glycan is attached at N506. A helical transmembrane segment spans residues 524–544 (GNIDALWWLNLITVTVVGLNL). A glycan (N-linked (GlcNAc...) asparagine) is linked at N551. Residues 554 to 574 (VSLLGFSDLLSMGLLSMITFL) form a helical membrane-spanning segment. Residue N578 is glycosylated (N-linked (GlcNAc...) asparagine). 3 helical membrane-spanning segments follow: residues 615–635 (IHTA…AVLV), 698–718 (YLLA…QSGG), and 740–760 (IYVV…YWSF). A glycan (N-linked (GlcNAc...) asparagine) is linked at N771. The next 2 membrane-spanning stretches (helical) occupy residues 783–803 (YPFI…CIIL) and 821–841 (MVWT…LLLL).

This sequence belongs to the PIGG/PIGN/PIGO family. PIGG subfamily.

It is found in the endoplasmic reticulum membrane. It participates in glycolipid biosynthesis; glycosylphosphatidylinositol-anchor biosynthesis. In terms of biological role, ethanolamine phosphate transferase involved in glycosylphosphatidylinositol-anchor biosynthesis. Transfers ethanolamine phosphate to the GPI second mannose. The protein is GPI ethanolamine phosphate transferase 2 (LAS21) of Candida glabrata (strain ATCC 2001 / BCRC 20586 / JCM 3761 / NBRC 0622 / NRRL Y-65 / CBS 138) (Yeast).